Reading from the N-terminus, the 178-residue chain is Large ribosomal subunit protein uL6 (178 aa).

Belongs to the universal ribosomal protein uL6 family. In terms of assembly, part of the 50S ribosomal subunit.

Functionally, this protein binds to the 23S rRNA, and is important in its secondary structure. It is located near the subunit interface in the base of the L7/L12 stalk, and near the tRNA binding site of the peptidyltransferase center. This Corynebacterium diphtheriae (strain ATCC 700971 / NCTC 13129 / Biotype gravis) protein is Large ribosomal subunit protein uL6.